The primary structure comprises 286 residues: Foldase protein PrsA 1 (286 aa).

Residues 1–18 (MKKAMLALAATSVIALSA) form the signal peptide. Cysteine 19 is lipidated: N-palmitoyl cysteine. Cysteine 19 carries S-diacylglycerol cysteine lipidation. Positions 130–220 (KPEIKASHIL…FGYHIIKVTD (91 aa)) constitute a PpiC domain.

It belongs to the PrsA family.

The protein localises to the cell membrane. It catalyses the reaction [protein]-peptidylproline (omega=180) = [protein]-peptidylproline (omega=0). Functionally, plays a major role in protein secretion by helping the post-translocational extracellular folding of several secreted proteins. The polypeptide is Foldase protein PrsA 1 (prsA1) (Bacillus cereus (strain ATCC 14579 / DSM 31 / CCUG 7414 / JCM 2152 / NBRC 15305 / NCIMB 9373 / NCTC 2599 / NRRL B-3711)).